A 307-amino-acid polypeptide reads, in one-letter code: RHOMBOID-like protein 6, mitochondrial (307 aa).

Residues 1 to 62 (MRSRDMERGR…DCVAKLLRRF (62 aa)) constitute a mitochondrion transit peptide. 6 consecutive transmembrane segments (helical) span residues 105-125 (WLHA…IFGI), 136-156 (IGLI…LFLQ), 159-179 (ISVG…SELL), 191-211 (ALLS…LPWV), 214-234 (FAHI…LMQP), and 262-282 (LFFV…VMLF). The active-site Nucleophile is the Ser-164. The active-site Charge relay system is the His-216.

It belongs to the peptidase S54 family.

It localises to the mitochondrion membrane. The catalysed reaction is Cleaves type-1 transmembrane domains using a catalytic dyad composed of serine and histidine that are contributed by different transmembrane domains.. In terms of biological role, probable rhomboid-type serine protease that catalyzes intramembrane proteolysis. Might be involved in response to abiotic stimuli. The protein is RHOMBOID-like protein 6, mitochondrial of Arabidopsis thaliana (Mouse-ear cress).